The chain runs to 325 residues: Glycerol-3-phosphate dehydrogenase [NAD(P)+] (325 aa).

Residues Trp15, Arg35, and Lys107 each coordinate NADPH. The sn-glycerol 3-phosphate site is built by Lys107, Gly135, and Ser137. Ala139 is an NADPH binding site. Positions 190, 243, 253, 254, and 255 each coordinate sn-glycerol 3-phosphate. The active-site Proton acceptor is the Lys190. An NADPH-binding site is contributed by Arg254. NADPH is bound by residues Leu272 and Glu274.

This sequence belongs to the NAD-dependent glycerol-3-phosphate dehydrogenase family.

The protein localises to the cytoplasm. It catalyses the reaction sn-glycerol 3-phosphate + NAD(+) = dihydroxyacetone phosphate + NADH + H(+). The enzyme catalyses sn-glycerol 3-phosphate + NADP(+) = dihydroxyacetone phosphate + NADPH + H(+). Its pathway is membrane lipid metabolism; glycerophospholipid metabolism. Functionally, catalyzes the reduction of the glycolytic intermediate dihydroxyacetone phosphate (DHAP) to sn-glycerol 3-phosphate (G3P), the key precursor for phospholipid synthesis. This chain is Glycerol-3-phosphate dehydrogenase [NAD(P)+], found in Afipia carboxidovorans (strain ATCC 49405 / DSM 1227 / KCTC 32145 / OM5) (Oligotropha carboxidovorans).